The following is a 187-amino-acid chain: GTP cyclohydrolase 1 (187 aa).

Zn(2+) is bound by residues C76, H79, and C148.

Belongs to the GTP cyclohydrolase I family. Toroid-shaped homodecamer, composed of two pentamers of five dimers.

It catalyses the reaction GTP + H2O = 7,8-dihydroneopterin 3'-triphosphate + formate + H(+). The protein operates within cofactor biosynthesis; 7,8-dihydroneopterin triphosphate biosynthesis; 7,8-dihydroneopterin triphosphate from GTP: step 1/1. In Streptococcus thermophilus (strain CNRZ 1066), this protein is GTP cyclohydrolase 1.